Consider the following 527-residue polypeptide: Protein Lilipod (527 aa).

Topologically, residues 1 to 22 are extracellular; it reads MDEEEEEEVTDLKLQLFHNTVR. A helical membrane pass occupies residues 23 to 43; that stretch reads EHIIFLLLIILLYSSSYVVVS. At 44–65 the chain is on the cytoplasmic side; it reads RFRRRDRDDLYSNDEDEVLVYR. The chain crosses the membrane as a helical span at residues 66-86; that stretch reads ISFWLCTFTLAVAEGAAMLLP. The Extracellular portion of the chain corresponds to 87-117; the sequence is VSIASNEVLLLYPNSYYVKWLNSSLIQGLWN. Residues 118 to 138 traverse the membrane as a helical segment; it reads HVFLFSNLSLFIFLPFVYLFS. The Cytoplasmic portion of the chain corresponds to 139–160; the sequence is ESTGFVGNKKGILPRVYETFTV. A helical membrane pass occupies residues 161–181; it reads FMLMAIIVLVLTAVLSAVFGI. Topologically, residues 182 to 194 are extracellular; the sequence is EKLQFFWFLNLGS. A helical membrane pass occupies residues 195 to 215; it reads VHLPFLYSCVSFLGVMLMLIC. Residues 216–341 are Cytoplasmic-facing; it reads TPYGFVRLFG…LRTSSTFQRT (126 aa). A helical membrane pass occupies residues 342–362; that stretch reads FVYPLAMLLLLFCTAVTILLV. Topologically, residues 363–395 are extracellular; the sequence is VQNTLELLIGIKALPLSTRQFALGISSLSKLGP. A helical transmembrane segment spans residues 396–416; that stretch reads FGAGLEVCLIFYLGATSVVGF. The Cytoplasmic segment spans residues 417-433; the sequence is YSMPFMRKVCPKRRQTS. Residues 434–454 traverse the membrane as a helical segment; sequence LPQLMLNCGFMLVLSSALPLL. The Extracellular segment spans residues 455–468; that stretch reads SRIIGITNFDLLGD. Residues 469–489 traverse the membrane as a helical segment; that stretch reads FGAIEWLGNFQIVLLYNLVFG. Residues 490 to 527 lie on the Cytoplasmic side of the membrane; it reads TTTALCLANKFTATVRRELRARLVENYVLFTNYISFIN.

Belongs to the LIMR family. In the ovary, detected in germline stem cells and their progeny. Also detected in the somatic follicular epithelium.

Its subcellular location is the cell membrane. Functionally, required during oogenesis to promote self-renewal of germline stem cells, probably by enhancing BMP signaling activity. The chain is Protein Lilipod from Drosophila melanogaster (Fruit fly).